A 452-amino-acid chain; its full sequence is Bifunctional protein GlmU (452 aa).

The segment at 1 to 226 (MVAVAILAAG…SQEILGINDR (226 aa)) is pyrophosphorylase. UDP-N-acetyl-alpha-D-glucosamine contacts are provided by residues 7–10 (LAAG), Lys-21, Gln-73, and 78–79 (GT). Asp-103 contacts Mg(2+). Positions 140, 155, 170, and 224 each coordinate UDP-N-acetyl-alpha-D-glucosamine. Asn-224 provides a ligand contact to Mg(2+). Residues 227–247 (LQLADSFRILQERIRQQWMLA) are linker. Residues 248-452 (GVTLVDPTSI…ENWSTPTTEQ (205 aa)) are N-acetyltransferase. Residues Arg-329 and Lys-347 each contribute to the UDP-N-acetyl-alpha-D-glucosamine site. His-359 functions as the Proton acceptor in the catalytic mechanism. UDP-N-acetyl-alpha-D-glucosamine is bound by residues Tyr-362 and Asn-373. Residues Ala-376, 382–383 (NY), Ala-419, and Arg-436 contribute to the acetyl-CoA site.

The protein in the N-terminal section; belongs to the N-acetylglucosamine-1-phosphate uridyltransferase family. This sequence in the C-terminal section; belongs to the transferase hexapeptide repeat family. Homotrimer. It depends on Mg(2+) as a cofactor.

The protein localises to the cytoplasm. The catalysed reaction is alpha-D-glucosamine 1-phosphate + acetyl-CoA = N-acetyl-alpha-D-glucosamine 1-phosphate + CoA + H(+). It catalyses the reaction N-acetyl-alpha-D-glucosamine 1-phosphate + UTP + H(+) = UDP-N-acetyl-alpha-D-glucosamine + diphosphate. It participates in nucleotide-sugar biosynthesis; UDP-N-acetyl-alpha-D-glucosamine biosynthesis; N-acetyl-alpha-D-glucosamine 1-phosphate from alpha-D-glucosamine 6-phosphate (route II): step 2/2. It functions in the pathway nucleotide-sugar biosynthesis; UDP-N-acetyl-alpha-D-glucosamine biosynthesis; UDP-N-acetyl-alpha-D-glucosamine from N-acetyl-alpha-D-glucosamine 1-phosphate: step 1/1. Its pathway is bacterial outer membrane biogenesis; LPS lipid A biosynthesis. Its function is as follows. Catalyzes the last two sequential reactions in the de novo biosynthetic pathway for UDP-N-acetylglucosamine (UDP-GlcNAc). The C-terminal domain catalyzes the transfer of acetyl group from acetyl coenzyme A to glucosamine-1-phosphate (GlcN-1-P) to produce N-acetylglucosamine-1-phosphate (GlcNAc-1-P), which is converted into UDP-GlcNAc by the transfer of uridine 5-monophosphate (from uridine 5-triphosphate), a reaction catalyzed by the N-terminal domain. In Synechococcus sp. (strain ATCC 27144 / PCC 6301 / SAUG 1402/1) (Anacystis nidulans), this protein is Bifunctional protein GlmU.